A 644-amino-acid chain; its full sequence is Karyogamy protein KAR9 (644 aa).

Position 496 is a phosphoserine (Ser-496). Disordered stretches follow at residues 506–534 and 606–644; these read SVPP…PDSF and PNSQ…TPTY. 2 stretches are compositionally biased toward basic and acidic residues: residues 523–534 and 634–644; these read SRGENEKSPDSF and REGRLDKTPTY.

It localises to the nucleus. The protein localises to the cytoplasm. Its subcellular location is the cytoskeleton. Its function is as follows. Involved in karyogamy. Component of a cortical adaptor complex that orients cytoplasmic microtubules. It may be involved in anchoring cytoplasmic microtubules to the cell cortex. In Saccharomyces cerevisiae (strain ATCC 204508 / S288c) (Baker's yeast), this protein is Karyogamy protein KAR9 (KAR9).